Here is a 345-residue protein sequence, read N- to C-terminus: NADH-ubiquinone oxidoreductase chain 2 (345 aa).

Helical transmembrane passes span 1–21 (MNPIINFILLFSMMAGTILAM), 25–45 (HWVYAWLGLELNTLAIIPIIS), 60–80 (FLIQAISSALFLLSGITNAYL), 113–133 (FWLPEVLQGVPILTALIIATW), 148–168 (LIPTPITLTMGLLSTIIGGLG), 191–211 (VIIITIAPNLTLLNLTLYMIF), 239–259 (IITSLFLLSLLSLGGLPPMSG), 274–294 (HLTPLALSMALMALLSLMFYL), and 324–344 (SSLSMLTPPSLLILPIMPLLI).

The protein belongs to the complex I subunit 2 family.

The protein localises to the mitochondrion inner membrane. It catalyses the reaction a ubiquinone + NADH + 5 H(+)(in) = a ubiquinol + NAD(+) + 4 H(+)(out). In terms of biological role, core subunit of the mitochondrial membrane respiratory chain NADH dehydrogenase (Complex I) that is believed to belong to the minimal assembly required for catalysis. Complex I functions in the transfer of electrons from NADH to the respiratory chain. The immediate electron acceptor for the enzyme is believed to be ubiquinone. In Varanus baritji (Black-spotted ridge-tailed monitor), this protein is NADH-ubiquinone oxidoreductase chain 2 (MT-ND2).